Consider the following 483-residue polypeptide: Phosphomethylpyrimidine synthase (483 aa).

Residues Asn-97, Met-126, Tyr-156, His-192, 212–214, 253–256, and Glu-292 each bind substrate; these read SRG and DSLR. Position 296 (His-296) interacts with Zn(2+). Tyr-319 serves as a coordination point for substrate. His-360 lines the Zn(2+) pocket. 3 residues coordinate [4Fe-4S] cluster: Cys-440, Cys-443, and Cys-448.

This sequence belongs to the ThiC family. Requires [4Fe-4S] cluster as cofactor.

It catalyses the reaction 5-amino-1-(5-phospho-beta-D-ribosyl)imidazole + S-adenosyl-L-methionine = 4-amino-2-methyl-5-(phosphooxymethyl)pyrimidine + CO + 5'-deoxyadenosine + formate + L-methionine + 3 H(+). Its pathway is cofactor biosynthesis; thiamine diphosphate biosynthesis. Catalyzes the synthesis of the hydroxymethylpyrimidine phosphate (HMP-P) moiety of thiamine from aminoimidazole ribotide (AIR) in a radical S-adenosyl-L-methionine (SAM)-dependent reaction. This is Phosphomethylpyrimidine synthase from Parasynechococcus marenigrum (strain WH8102).